Here is a 631-residue protein sequence, read N- to C-terminus: Nucleoside triphosphatase I (631 aa).

The Helicase ATP-binding domain maps to 42-204 (FLGLDTMHSI…TMIVNLLRPK (163 aa)). 55–62 (HDTGVGKT) is a binding site for ATP. The short motif at 141–144 (DECH) is the DEXH box element. The Helicase C-terminal domain occupies 367 to 536 (KFTEVCLKIL…LFKVFKESSI (170 aa)). Residues 457 to 524 (DIFILDMTWN…NIIKTKSKEF (68 aa)) are binding to the cap-specific mRNA (nucleoside-2'-O-)-methyltransferase.

The protein belongs to the helicase family. NPH I subfamily. As to quaternary structure, monomer. Interacts (via C-terminus) with RAP94 (via N-terminus). Interacts with the cap-specific mRNA (nucleoside-2'-O-)-methyltransferase.

It is found in the virion. The catalysed reaction is a ribonucleoside 5'-triphosphate + H2O = a ribonucleoside 5'-diphosphate + phosphate + H(+). In terms of biological role, DNA-dependent ATPase required for providing the needed energy to achieve the termination of early transcripts. Acts in concert with the RAP94 subunit of the virion RNA polymerase and the capping enzyme/VTF to catalyze release of UUUUUNU-containing nascent RNA from the elongation complex. NPH-I must bind ssDNA in order to exhibit ATPase activity. This Erythrocebus patas (Red guenon) protein is Nucleoside triphosphatase I (NPH1).